We begin with the raw amino-acid sequence, 477 residues long: Probable malate:quinone oxidoreductase (477 aa).

The protein belongs to the MQO family. The cofactor is FAD.

It carries out the reaction (S)-malate + a quinone = a quinol + oxaloacetate. The protein operates within carbohydrate metabolism; tricarboxylic acid cycle; oxaloacetate from (S)-malate (quinone route): step 1/1. This chain is Probable malate:quinone oxidoreductase, found in Synechococcus sp. (strain RCC307).